We begin with the raw amino-acid sequence, 75 residues long: Serine rich endogenous peptide 20 (75 aa).

Residues 1–25 (MYKLTLCILTLSFLLLSGLSNTVLA) form the signal peptide. The SCOOP motif signature appears at 52–66 (KIGASGSNSGRAPSC). The segment at 54 to 75 (GASGSNSGRAPSCNNSCKPNRP) is disordered. The SxS motif essential for MIK2 binding motif lies at 56–58 (SGS). Positions 56 to 75 (SGSNSGRAPSCNNSCKPNRP) are enriched in polar residues.

The protein belongs to the serine rich endogenous peptide (SCOOP) phytocytokine family. As to quaternary structure, interacts with MIK2 (via extracellular leucine-rich repeat domain); this interaction triggers the formation of complex between MIK2 and the BAK1/SERK3 and SERK4 coreceptors, and subsequent BAK1 activation by phosphorylation. As to expression, mostly expressed in roots.

The protein localises to the cell membrane. It localises to the secreted. Its subcellular location is the extracellular space. It is found in the apoplast. Brassicaceae-specific phytocytokine (plant endogenous peptide released into the apoplast) perceived by MIK2 in a BAK1/SERK3 and SERK4 coreceptors-dependent manner, that modulates various physiological and antimicrobial processes including growth prevention and reactive oxygen species (ROS) response regulation. Inhibits root growth. The protein is Serine rich endogenous peptide 20 of Arabidopsis thaliana (Mouse-ear cress).